We begin with the raw amino-acid sequence, 525 residues long: ALBINO3-like protein 2, chloroplastic (525 aa).

The next 4 membrane-spanning stretches (helical) occupy residues 99 to 119 (WMII…LLIL), 167 to 187 (LWFF…MASI), 217 to 237 (FGPV…QISF), and 262 to 282 (ILSV…LVYW). TPR repeat units follow at residues 346-379 (PEEL…DPGY), 380-413 (VRGL…LLDE), 425-458 (MLAS…REPG), and 467-500 (FEAL…NPAY).

Belongs to the OXA1/ALB3/YidC (TC 2.A.9.2) family.

The protein resides in the plastid. Its subcellular location is the chloroplast thylakoid membrane. Functionally, probably required for the insertion of integral membrane proteins into the chloroplast thylakoid membranes. In Arabidopsis thaliana (Mouse-ear cress), this protein is ALBINO3-like protein 2, chloroplastic (ALB3L2).